The sequence spans 818 residues: Sodium/hydrogen exchanger 1 (818 aa).

At 1 to 98 (MLLWPGASGL…FPVLGIDYQH (98 aa)) the chain is on the extracellular side. Residues 44–76 (STIRGSEPPRERSIGDVTTAPPELAPESRPVNH) are disordered. Asn-75 carries N-linked (GlcNAc...) asparagine glycosylation. Residues 99–121 (VRIPFEIALWILLACLMKIGFHV) traverse the membrane as a helical segment. Over 122–130 (IPTISSIVP) the chain is Cytoplasmic. Residues 131-148 (ESCLLIVVGLLVGGLIKG) form a helical membrane-spanning segment. The Extracellular segment spans residues 149–158 (VGETPPILQS). A helical transmembrane segment spans residues 159 to 176 (EVFFLFLLPPIILDAGYF). Residues 177-186 (LPLRQFTENL) are Cytoplasmic-facing. Residues 187 to 215 (GTILIFAVVGTLWNAFFLGGLMYAVCLVG) traverse the membrane as a helical segment. At 216–222 (GEQINNI) the chain is on the extracellular side. A helical transmembrane segment spans residues 223 to 249 (GLLENLLFGSIISAVDPVAVLAVFEEI). The Cytoplasmic portion of the chain corresponds to 250 to 252 (HIN). The helical transmembrane segment at 253–283 (ELLHILVFGESLLNDAVTVVLYHLFEEFANY) threads the bilayer. Residues 284–287 (DRVG) lie on the Extracellular side of the membrane. The helical transmembrane segment at 288 to 322 (IVDIILGFLSFFVVSLGGVFVGVVYGVIAAFTSRF) threads the bilayer. The Cytoplasmic segment spans residues 323–328 (TSHIRV). The helical transmembrane segment at 329-341 (IEPLFVFLYSYMA) threads the bilayer. Topologically, residues 342–350 (YLSAELFHL) are extracellular. Residues 351–371 (SGIMALIASGVVMRPYVEANI) traverse the membrane as a helical segment. Over 372 to 373 (SH) the chain is Cytoplasmic. The helical transmembrane segment at 374 to 404 (KSHTTIKYFLKMWSSVSETLIFIFLGVSTVA) threads the bilayer. The Extracellular segment spans residues 405-410 (GSHHWN). Residues 411-438 (WTFVISTLLFCLIARVLGVLGLTWFINK) form a helical membrane-spanning segment. Over 439 to 444 (FRIVKL) the chain is Cytoplasmic. A helical transmembrane segment spans residues 445–469 (TPKDQFIIAYGGLRGAIAFSLGYLL). Residues 470–475 (DKKHFP) lie on the Extracellular side of the membrane. Residues 476 to 505 (MCDLFLTAIITVIFFTVFVQGMTIRPLVDL) form a helical membrane-spanning segment. Positions 503–545 (VDLLAVKKKQETKRSINEEIHTQFLDHLLTGIEDICGHYGHHH) are interaction with TESC. The Cytoplasmic portion of the chain corresponds to 506 to 818 (LAVKKKQETK…EGEPFIPKGQ (313 aa)). The interval 509–516 (KKKQETKR) is PI(4,5)P2-binding region. Residues 515-545 (KRSINEEIHTQFLDHLLTGIEDICGHYGHHH) are interaction with CHP2. A confers pH-dependent PI(4,5)P2 binding region spans residues 540–545 (HYGHHH). The segment at 552–560 (RFNKKYVKK) is PI(4,5)P2-binding region. Ser-599 and Ser-602 each carry phosphoserine. Position 603 is a phosphothreonine (Thr-603). Residues Ser-605 and Ser-648 each carry the phosphoserine modification. Residues 633-818 (KILRNNLQKT…EGEPFIPKGQ (186 aa)) are interaction with TESC. The interval 633–818 (KILRNNLQKT…EGEPFIPKGQ (186 aa)) is interaction with CALM1. The interaction with PPP3CA stretch occupies residues 684–687 (LTVP). 3 positions are modified to phosphoserine: Ser-693, Ser-697, and Ser-703. The segment at 715–720 (PVITID) is interaction with PPP3CA. 3 positions are modified to phosphoserine: Ser-723, Ser-726, and Ser-729. Residues 741–818 (VLGLSRDPGR…EGEPFIPKGQ (78 aa)) are disordered. Thr-782 bears the Phosphothreonine mark. A compositionally biased stretch (polar residues) spans 785-794 (PSDSPSSQRI). A phosphoserine mark is found at Ser-788, Ser-790, and Ser-799.

It belongs to the monovalent cation:proton antiporter 1 (CPA1) transporter (TC 2.A.36) family. In terms of assembly, homodimer; dimerization is crucial for its function. Oligomer. Interacts with CALM in a calcium-dependent manner. Interacts with TESC. Interacts (via the juxtamembrane region of the cytoplasmic C-terminal domain) with CHP1; the interaction occurs at the plasma membrane in a calcium-dependent manner. Interacts with CHP2; the interaction occurs in a calcium-dependent manner. Interacts with EZR; regulates the cytoskeletal interactions of SLC9A1 and promotes stress fiber formation. Post-translationally, ubiquitinated, leading to its degradation by the proteasome. Ubiquitination is reduced by CHP1. O-glycosylated. In terms of processing, palmitoylated; may play a major role in SLC9A1 regulation. Post-translationally, phosphorylation at Thr-782 increases SLC9A1 activity. Specifically dephosphorylated at Thr-782 by PPP3CA that negatively regulates SLC9A1 activity. Phosphorylation at Ser-648 by AKT1 reduces SLC9A1 binding to CALM1.

Its subcellular location is the cell membrane. It is found in the basolateral cell membrane. The catalysed reaction is Na(+)(in) + H(+)(out) = Na(+)(out) + H(+)(in). It catalyses the reaction Li(+)(out) + H(+)(in) = Li(+)(in) + H(+)(out). The enzyme catalyses Li(+)(in) + Na(+)(out) = Li(+)(out) + Na(+)(in). Its activity is regulated as follows. Activated at acidic pHs. Inhibited by amiloride and 5-amino-substituted derivatives. Inhibited by cariporide and eniporide. Phosphatidylinositol 4,5-bisphosphate (PI(4,5)P2) and phosphatidylinositol 3,4,5-trisphosphate (PI(3,4,5)P3) bind and differentially regulate SLC9A1 activity. Its function is as follows. Electroneutral Na(+) /H(+) antiporter that extrudes Na(+) in exchange for external protons driven by the inward sodium ion chemical gradient, protecting cells from acidification that occurs from metabolism. Exchanges intracellular H(+) ions for extracellular Na(+) in 1:1 stoichiometry. Plays a key role in maintening intracellular pH neutral and cell volume, and thus is important for cell growth, proliferation, migration and survival. In addition, can transport lithium Li(+) and also functions as a Na(+)/Li(+) antiporter. SLC9A1 also functions in membrane anchoring and organization of scaffolding complexes that coordinate signaling inputs. The sequence is that of Sodium/hydrogen exchanger 1 (SLC9A1) from Bos taurus (Bovine).